The chain runs to 707 residues: MSERLSEISRHMRELRDAIELHNIRYYELDTPTIPDADFDKLFRELEELEQRHPELITPDSPTQRVGIPPLKAFPQVVHRTPMLSLSNAFTEGEVEAFDRRVRQSLGIAQVEYAVEPKFDGLAISLCYENGMLVSGATRGDGYIGEDVTLNLKTIRSIPLGLRAGDGSAEVPAFLEVRGEVLMLKADFERLNRQQREKNEKTFINPRNAAAGSLRQLDPCITANRNLRFFAYGIGVCEGGNVPHDTHSHLLDYLSSLRFPVMRERRTVTGVAGLLEYHHEINGLREQLSYDIDGTVYKVNELEYQEKLGFVSRAPRFALAHKFPAQEATTELLGIDVQVGRTGALTPVARLKPVFVGGATVTNATLHNEDEIRRKDVMIGDRVTVRRAGDVIPEVVAVQKESRPSNAKPFVMPEHCPVCGSRTIRLPGETLTRCTGGLFCPAQRKQAILHFASRRAMNIHGLGDKLVDHLVDNAIIRTPADLYKLGLAALAALDRMGEKSAGNIINEIEKSKDTTLARFIYSLGIRNVGEATARDLARYFGGLDRLMDADVETLQQVSDVGPVVAQSIADFFGERHNREVVEQLRAAGIRWKEGAGTQTTDHAAGSAHPGAAAASSKIAGRSFVLTGTLPTMSREEAREKIEAMGGKVAGSVSKKTDYVVAGADAGSKYDKALELGVALLDEAELIRLLQASQADNSSTHVDPERMV.

NAD(+) is bound by residues 36–40 (DADFD), 85–86 (SL), and Glu-116. Lys-118 acts as the N6-AMP-lysine intermediate in catalysis. NAD(+) is bound by residues Arg-139, Glu-180, Lys-298, and Lys-322. Zn(2+) contacts are provided by Cys-416, Cys-419, Cys-434, and Cys-440. The BRCT domain occupies 613 to 707 (AASSKIAGRS…STHVDPERMV (95 aa)).

The protein belongs to the NAD-dependent DNA ligase family. LigA subfamily. Requires Mg(2+) as cofactor. Mn(2+) is required as a cofactor.

The enzyme catalyses NAD(+) + (deoxyribonucleotide)n-3'-hydroxyl + 5'-phospho-(deoxyribonucleotide)m = (deoxyribonucleotide)n+m + AMP + beta-nicotinamide D-nucleotide.. Functionally, DNA ligase that catalyzes the formation of phosphodiester linkages between 5'-phosphoryl and 3'-hydroxyl groups in double-stranded DNA using NAD as a coenzyme and as the energy source for the reaction. It is essential for DNA replication and repair of damaged DNA. In Nitrosospira multiformis (strain ATCC 25196 / NCIMB 11849 / C 71), this protein is DNA ligase.